Consider the following 297-residue polypeptide: Probable endonuclease 4 (297 aa).

Residues histidine 68, histidine 109, glutamate 144, aspartate 178, histidine 181, histidine 213, aspartate 226, histidine 228, and glutamate 258 each coordinate Zn(2+).

This sequence belongs to the AP endonuclease 2 family. Requires Zn(2+) as cofactor.

The catalysed reaction is Endonucleolytic cleavage to 5'-phosphooligonucleotide end-products.. Its function is as follows. Endonuclease IV plays a role in DNA repair. It cleaves phosphodiester bonds at apurinic or apyrimidinic (AP) sites, generating a 3'-hydroxyl group and a 5'-terminal sugar phosphate. This chain is Probable endonuclease 4, found in Lysinibacillus sphaericus (strain C3-41).